The sequence spans 328 residues: Phenylalanine--tRNA ligase alpha subunit (328 aa).

Residue Glu-245 coordinates Mg(2+).

The protein belongs to the class-II aminoacyl-tRNA synthetase family. Phe-tRNA synthetase alpha subunit type 1 subfamily. In terms of assembly, tetramer of two alpha and two beta subunits. Requires Mg(2+) as cofactor.

It is found in the cytoplasm. It catalyses the reaction tRNA(Phe) + L-phenylalanine + ATP = L-phenylalanyl-tRNA(Phe) + AMP + diphosphate + H(+). The protein is Phenylalanine--tRNA ligase alpha subunit of Helicobacter pylori (strain P12).